The chain runs to 416 residues: Gamma-glutamyl phosphate reductase (416 aa).

This sequence belongs to the gamma-glutamyl phosphate reductase family.

The protein localises to the cytoplasm. The catalysed reaction is L-glutamate 5-semialdehyde + phosphate + NADP(+) = L-glutamyl 5-phosphate + NADPH + H(+). It functions in the pathway amino-acid biosynthesis; L-proline biosynthesis; L-glutamate 5-semialdehyde from L-glutamate: step 2/2. In terms of biological role, catalyzes the NADPH-dependent reduction of L-glutamate 5-phosphate into L-glutamate 5-semialdehyde and phosphate. The product spontaneously undergoes cyclization to form 1-pyrroline-5-carboxylate. This is Gamma-glutamyl phosphate reductase from Leptospira borgpetersenii serovar Hardjo-bovis (strain JB197).